The chain runs to 441 residues: tRNA modification GTPase MnmE (441 aa).

(6S)-5-formyl-5,6,7,8-tetrahydrofolate contacts are provided by Arg-22, Glu-80, and Lys-118. One can recognise a TrmE-type G domain in the interval 213 to 366 (GIYIAIVGEP…LLNLIKQRVE (154 aa)). GTP contacts are provided by residues 223 to 228 (NSGKST), 242 to 248 (SEYAGTT), and 267 to 270 (DTAG). Residues Ser-227 and Thr-248 each coordinate Mg(2+). Lys-441 serves as a coordination point for (6S)-5-formyl-5,6,7,8-tetrahydrofolate.

The protein belongs to the TRAFAC class TrmE-Era-EngA-EngB-Septin-like GTPase superfamily. TrmE GTPase family. In terms of assembly, homodimer. Heterotetramer of two MnmE and two MnmG subunits. The cofactor is K(+).

Its subcellular location is the cytoplasm. Its function is as follows. Exhibits a very high intrinsic GTPase hydrolysis rate. Involved in the addition of a carboxymethylaminomethyl (cmnm) group at the wobble position (U34) of certain tRNAs, forming tRNA-cmnm(5)s(2)U34. This chain is tRNA modification GTPase MnmE, found in Ehrlichia canis (strain Jake).